We begin with the raw amino-acid sequence, 176 residues long: Large ribosomal subunit protein uL5 (176 aa).

The protein belongs to the universal ribosomal protein uL5 family. In terms of assembly, part of the 50S ribosomal subunit; contacts the 5S rRNA and probably tRNA. Forms a bridge to the 30S subunit in the 70S ribosome.

Its function is as follows. This is one of the proteins that bind and probably mediate the attachment of the 5S RNA into the large ribosomal subunit, where it forms part of the central protuberance. In the 70S ribosome it contacts protein S13 of the 30S subunit (bridge B1b), connecting the 2 subunits; this bridge is implicated in subunit movement. May contact the P site tRNA; the 5S rRNA and some of its associated proteins might help stabilize positioning of ribosome-bound tRNAs. This is Large ribosomal subunit protein uL5 from Picrophilus torridus (strain ATCC 700027 / DSM 9790 / JCM 10055 / NBRC 100828 / KAW 2/3).